The sequence spans 174 residues: MTTIVSVRRNNQVVIAGDGQVSLGNTVMKGNARKVRRLYHNKVLAGFAGGTADAFTLFERFEAKLEMHQGHLMRAAVEMAKDWRSDKVLRKLEALLAVADAESSLIITGNGDVVQPENDLIAIGSGGAFAQSAATALLENTDLSALEIAEKSLTIAGDICVFTNQFKTIEELKY.

The active site involves Thr-2. Positions 157, 160, and 163 each coordinate Na(+).

It belongs to the peptidase T1B family. HslV subfamily. A double ring-shaped homohexamer of HslV is capped on each side by a ring-shaped HslU homohexamer. The assembly of the HslU/HslV complex is dependent on binding of ATP.

The protein resides in the cytoplasm. It carries out the reaction ATP-dependent cleavage of peptide bonds with broad specificity.. With respect to regulation, allosterically activated by HslU binding. In terms of biological role, protease subunit of a proteasome-like degradation complex believed to be a general protein degrading machinery. This Shewanella halifaxensis (strain HAW-EB4) protein is ATP-dependent protease subunit HslV.